The sequence spans 85 residues: Putative membrane protein insertion efficiency factor (85 aa).

The protein belongs to the UPF0161 family.

It is found in the cell inner membrane. Its function is as follows. Could be involved in insertion of integral membrane proteins into the membrane. The polypeptide is Putative membrane protein insertion efficiency factor (Escherichia coli O6:H1 (strain CFT073 / ATCC 700928 / UPEC)).